The following is a 218-amino-acid chain: Octanoyltransferase (218 aa).

One can recognise a BPL/LPL catalytic domain in the interval 31-206 (EETPDEVWLV…ELVNLLGYEQ (176 aa)). Substrate contacts are provided by residues 70 to 77 (RGGQVTYH), 137 to 139 (SLG), and 150 to 152 (GLA). Cysteine 168 acts as the Acyl-thioester intermediate in catalysis.

The protein belongs to the LipB family.

It is found in the cytoplasm. It carries out the reaction octanoyl-[ACP] + L-lysyl-[protein] = N(6)-octanoyl-L-lysyl-[protein] + holo-[ACP] + H(+). It functions in the pathway protein modification; protein lipoylation via endogenous pathway; protein N(6)-(lipoyl)lysine from octanoyl-[acyl-carrier-protein]: step 1/2. Its function is as follows. Catalyzes the transfer of endogenously produced octanoic acid from octanoyl-acyl-carrier-protein onto the lipoyl domains of lipoate-dependent enzymes. Lipoyl-ACP can also act as a substrate although octanoyl-ACP is likely to be the physiological substrate. In Vibrio vulnificus (strain YJ016), this protein is Octanoyltransferase.